We begin with the raw amino-acid sequence, 234 residues long: Membrane glycoprotein RL11 (234 aa).

An N-terminal signal peptide occupies residues 1 to 23 (MQTYSTPLTLIIVTSLFLFTTQG). The helical transmembrane segment at 183–203 (LHCAWVSGLMIFVGALVICFL) threads the bilayer.

Its subcellular location is the host membrane. In Human cytomegalovirus (strain Merlin) (HHV-5), this protein is Membrane glycoprotein RL11 (RL11).